A 426-amino-acid chain; its full sequence is Serine--tRNA ligase (426 aa).

An L-serine-binding site is contributed by 229-231 (TAE). An ATP-binding site is contributed by 260-262 (RSE). Glu-283 contacts L-serine. Residue 347-350 (EIAS) participates in ATP binding. L-serine is bound at residue Ser-383.

Belongs to the class-II aminoacyl-tRNA synthetase family. Type-1 seryl-tRNA synthetase subfamily. As to quaternary structure, homodimer. The tRNA molecule binds across the dimer.

The protein localises to the cytoplasm. It carries out the reaction tRNA(Ser) + L-serine + ATP = L-seryl-tRNA(Ser) + AMP + diphosphate + H(+). It catalyses the reaction tRNA(Sec) + L-serine + ATP = L-seryl-tRNA(Sec) + AMP + diphosphate + H(+). Its pathway is aminoacyl-tRNA biosynthesis; selenocysteinyl-tRNA(Sec) biosynthesis; L-seryl-tRNA(Sec) from L-serine and tRNA(Sec): step 1/1. In terms of biological role, catalyzes the attachment of serine to tRNA(Ser). Is also able to aminoacylate tRNA(Sec) with serine, to form the misacylated tRNA L-seryl-tRNA(Sec), which will be further converted into selenocysteinyl-tRNA(Sec). In Rickettsia bellii (strain RML369-C), this protein is Serine--tRNA ligase.